Consider the following 358-residue polypeptide: Magnesium-protoporphyrin IX monomethyl ester [oxidative] cyclase (358 aa).

This sequence belongs to the AcsF family. Fe cation serves as cofactor.

The catalysed reaction is Mg-protoporphyrin IX 13-monomethyl ester + 3 NADPH + 3 O2 + 2 H(+) = 3,8-divinyl protochlorophyllide a + 3 NADP(+) + 5 H2O. It participates in porphyrin-containing compound metabolism; chlorophyll biosynthesis (light-independent). In terms of biological role, catalyzes the formation of the isocyclic ring in chlorophyll biosynthesis. Mediates the cyclase reaction, which results in the formation of divinylprotochlorophyllide (Pchlide) characteristic of all chlorophylls from magnesium-protoporphyrin IX 13-monomethyl ester (MgPMME). The protein is Magnesium-protoporphyrin IX monomethyl ester [oxidative] cyclase of Synechococcus elongatus (strain ATCC 33912 / PCC 7942 / FACHB-805) (Anacystis nidulans R2).